The following is a 60-amino-acid chain: RTKRDVCELPFEEGPCFAAIRVYAYNAKTGDCEQLTYGGCEGNGNRFATLEDCDNACARY.

The propeptide occupies 1–2 (RT). The 51-residue stretch at 7–57 (CELPFEEGPCFAAIRVYAYNAKTGDCEQLTYGGCEGNGNRFATLEDCDNAC) folds into the BPTI/Kunitz inhibitor domain. Disulfide bonds link Cys-7-Cys-57, Cys-16-Cys-40, and Cys-32-Cys-53.

This sequence belongs to the venom Kunitz-type family. As to expression, expressed by the venom duct.

The protein localises to the secreted. This Californiconus californicus (California cone) protein is Kunitz-type serine protease inhibitor conotoxin Cal9.1d.